We begin with the raw amino-acid sequence, 379 residues long: Protein trichome birefringence-like 36 (379 aa).

A helical; Signal-anchor for type II membrane protein membrane pass occupies residues 8–24 (VLFLSLCLILGKVVLSQ). Positions 123–125 (GDS) match the GDS motif motif. The DCXHWCLPGXXDXWN motif signature appears at 353–367 (DCSHWCLPGVPDIWN).

Belongs to the PC-esterase family. TBL subfamily.

Its subcellular location is the membrane. Its function is as follows. May act as a bridging protein that binds pectin and other cell wall polysaccharides. Probably involved in maintaining esterification of pectins. May be involved in the specific O-acetylation of cell wall polymers. The protein is Protein trichome birefringence-like 36 (TBL36) of Arabidopsis thaliana (Mouse-ear cress).